We begin with the raw amino-acid sequence, 934 residues long: Serine/threonine-protein kinase PknD (934 aa).

The region spanning tyrosine 4–leucine 296 is the Protein kinase domain. Residues isoleucine 10 to valine 18 and lysine 33 contribute to the ATP site. The Proton acceptor role is filled by aspartate 138.

Belongs to the protein kinase superfamily. Ser/Thr protein kinase family. Interacts with Pkn1. Post-translationally, autophosphorylated on serine and threonine residues. Present in elementary bodies 40 hours post-infection as 2 bands of approximately 55 to 60 and 45 to 50 kDa, which may be due to differential phosphorylation as well as degradation; an enzymatically active full-length protein can also be detected.

The enzyme catalyses L-seryl-[protein] + ATP = O-phospho-L-seryl-[protein] + ADP + H(+). It catalyses the reaction L-threonyl-[protein] + ATP = O-phospho-L-threonyl-[protein] + ADP + H(+). Functionally, together with the serine/threonine kinase Pkn1, may play a role in the specific interactions with host proteins during intracellular growth. Autophosphorylates and also phosphorylates Pkn1. The polypeptide is Serine/threonine-protein kinase PknD (Chlamydia trachomatis serovar L2 (strain ATCC VR-902B / DSM 19102 / 434/Bu)).